The chain runs to 132 residues: Small ribosomal subunit protein uS9 (132 aa).

Belongs to the universal ribosomal protein uS9 family.

This is Small ribosomal subunit protein uS9 (rpsI) from Mycoplasma pneumoniae (strain ATCC 29342 / M129 / Subtype 1) (Mycoplasmoides pneumoniae).